The following is a 150-amino-acid chain: Small ribosomal subunit protein uS7c (150 aa).

This sequence belongs to the universal ribosomal protein uS7 family. As to quaternary structure, part of the 30S ribosomal subunit.

Its subcellular location is the plastid. The protein localises to the chloroplast. Functionally, one of the primary rRNA binding proteins, it binds directly to 16S rRNA where it nucleates assembly of the head domain of the 30S subunit. This Huperzia lucidula (Shining clubmoss) protein is Small ribosomal subunit protein uS7c (rps7).